The sequence spans 118 residues: Appetite-regulating hormone (118 aa).

A signal peptide spans 1 to 24; sequence MPSTGTICSLLLLSVLLMADLAMA. Residue Ser27 is the site of O-decanoyl serine; alternate attachment. The O-hexanoyl serine; alternate moiety is linked to residue Ser27. A lipid anchor (O-octanoyl serine; alternate) is attached at Ser27. The tract at residues 29-50 is disordered; that stretch reads LSPEHQKVQQRKESKKPAAKLK. Residues 32–44 are compositionally biased toward basic and acidic residues; the sequence is EHQKVQQRKESKK. A propeptide spans 53 to 76 (removed in mature form); sequence ALEGWLGPEDSGEVEGTEDKLEIR. Leu99 bears the Leucine amide mark. Residues 100 to 118 constitute a propeptide, removed in mature form; that stretch reads GKFLQDILWEEVTEAPADK.

Belongs to the motilin family. Post-translationally, O-octanoylated by GOAT/MBOAT4. O-octanoylation is essential for ghrelin activity. Amidation of Leu-99 is essential for obestatin activity.

The protein resides in the secreted. Its function is as follows. Ghrelin is the ligand for growth hormone secretagogue receptor type 1 (GHSR). Induces the release of growth hormone from the pituitary. Has an appetite-stimulating effect, induces adiposity and stimulates gastric acid secretion. Involved in growth regulation. In terms of biological role, obestatin may be the ligand for GPR39. May have an appetite-reducing effect resulting in decreased food intake. May reduce gastric emptying activity and jejunal motility. The protein is Appetite-regulating hormone (GHRL) of Sus scrofa (Pig).